The chain runs to 392 residues: 23S rRNA (uracil(747)-C(5))-methyltransferase RlmC (392 aa).

Positions 4, 12, 15, and 93 each coordinate [4Fe-4S] cluster. S-adenosyl-L-methionine-binding residues include Q218, F247, E275, and N321. Catalysis depends on C348, which acts as the Nucleophile.

This sequence belongs to the class I-like SAM-binding methyltransferase superfamily. RNA M5U methyltransferase family. RlmC subfamily.

It carries out the reaction uridine(747) in 23S rRNA + S-adenosyl-L-methionine = 5-methyluridine(747) in 23S rRNA + S-adenosyl-L-homocysteine + H(+). Its function is as follows. Catalyzes the formation of 5-methyl-uridine at position 747 (m5U747) in 23S rRNA. The protein is 23S rRNA (uracil(747)-C(5))-methyltransferase RlmC of Haemophilus influenzae (strain 86-028NP).